The primary structure comprises 191 residues: Prostaglandin-H2 D-isomerase (191 aa).

A signal peptide spans 1 to 24 (MAALHTLWMGLVLLGVLGVLQTRA). The residue at position 25 (Gln-25) is a Pyrrolidone carboxylic acid. N-linked (GlcNAc...) asparagine glycosylation occurs at Asn-51. Cys-65 functions as the Nucleophile in the catalytic mechanism. Asn-78 carries an N-linked (GlcNAc...) asparagine glycan. Cys-89 and Cys-186 are disulfide-bonded.

The protein belongs to the calycin superfamily. Lipocalin family. In terms of assembly, monomer. N- and O-glycosylated. Both N-glycosylation recognition sites are almost quantitatively occupied by N-glycans of the biantennary complex type, with a considerable proportion of structures bearing a bisecting GlcNAc. N-glycan at Asn-78: dHex1Hex5HexNAc4. Agalacto structure as well as sialylated and nonsialylated oligosaccharides bearing alpha2-3- and/or alpha2-6-linked NeuNAc are present.

The protein resides in the rough endoplasmic reticulum. The protein localises to the nucleus membrane. It localises to the golgi apparatus. Its subcellular location is the cytoplasm. It is found in the perinuclear region. The protein resides in the secreted. It catalyses the reaction prostaglandin H2 = prostaglandin D2. In terms of biological role, catalyzes the conversion of PGH2 to PGD2, a prostaglandin involved in smooth muscle contraction/relaxation and a potent inhibitor of platelet aggregation. Involved in a variety of CNS functions, such as sedation, NREM sleep and PGE2-induced allodynia, and may have an anti-apoptotic role in oligodendrocytes. Binds small non-substrate lipophilic molecules, including biliverdin, bilirubin, retinal, retinoic acid and thyroid hormone, and may act as a scavenger for harmful hydrophobic molecules and as a secretory retinoid and thyroid hormone transporter. Possibly involved in development and maintenance of the blood-brain, blood-retina, blood-aqueous humor and blood-testis barrier. It is likely to play important roles in both maturation and maintenance of the central nervous system and male reproductive system. Involved in PLA2G3-dependent maturation of mast cells. PLA2G3 is secreted by immature mast cells and acts on nearby fibroblasts upstream to PTDGS to synthesize PGD2, which in turn promotes mast cell maturation and degranulation via PTGDR. This chain is Prostaglandin-H2 D-isomerase (PTGDS), found in Felis catus (Cat).